Consider the following 204-residue polypeptide: E2 ubiquitin-conjugating enzyme PEX4 (204 aa).

Residues serine 2 to isoleucine 196 form the UBC core domain. Catalysis depends on cysteine 133, which acts as the Glycyl thioester intermediate.

Belongs to the ubiquitin-conjugating enzyme family.

It is found in the peroxisome membrane. It catalyses the reaction S-ubiquitinyl-[E1 ubiquitin-activating enzyme]-L-cysteine + [E2 ubiquitin-conjugating enzyme]-L-cysteine = [E1 ubiquitin-activating enzyme]-L-cysteine + S-ubiquitinyl-[E2 ubiquitin-conjugating enzyme]-L-cysteine.. It functions in the pathway protein modification; protein ubiquitination. E2 ubiquitin-conjugating enzyme involved in peroxisome biosynthesis. Acts late in peroxisomal matrix protein import, after matrix protein translocation. Required for both monoubiquitination and polyubiquitination of coreceptor PEX20. polyubiquitination of PEX20 at conserved lysine 'Lys-19' near the N-terminus leads to its and proteasomal degradation, whereas a monoubiquitination at the conserved cysteine 'Cys-8' is essential for its recycling. The polypeptide is E2 ubiquitin-conjugating enzyme PEX4 (Komagataella phaffii (strain GS115 / ATCC 20864) (Yeast)).